Consider the following 185-residue polypeptide: CDP-diacylglycerol--glycerol-3-phosphate 3-phosphatidyltransferase (185 aa).

4 helical membrane passes run 7 to 26, 33 to 52, 89 to 108, and 151 to 172; these read IFLT…AFYL, FITT…DGYL, FWIT…ISAL, and IAAI…IQYL.

This sequence belongs to the CDP-alcohol phosphatidyltransferase class-I family.

The protein resides in the cell membrane. It catalyses the reaction a CDP-1,2-diacyl-sn-glycerol + sn-glycerol 3-phosphate = a 1,2-diacyl-sn-glycero-3-phospho-(1'-sn-glycero-3'-phosphate) + CMP + H(+). Its pathway is phospholipid metabolism; phosphatidylglycerol biosynthesis; phosphatidylglycerol from CDP-diacylglycerol: step 1/2. Its function is as follows. This protein catalyzes the committed step to the synthesis of the acidic phospholipids. This is CDP-diacylglycerol--glycerol-3-phosphate 3-phosphatidyltransferase (pgsA) from Haemophilus influenzae (strain ATCC 51907 / DSM 11121 / KW20 / Rd).